We begin with the raw amino-acid sequence, 232 residues long: ATP phosphoribosyltransferase (232 aa).

The protein belongs to the ATP phosphoribosyltransferase family. Short subfamily. In terms of assembly, heteromultimer composed of HisG and HisZ subunits.

Its subcellular location is the cytoplasm. It carries out the reaction 1-(5-phospho-beta-D-ribosyl)-ATP + diphosphate = 5-phospho-alpha-D-ribose 1-diphosphate + ATP. The protein operates within amino-acid biosynthesis; L-histidine biosynthesis; L-histidine from 5-phospho-alpha-D-ribose 1-diphosphate: step 1/9. Its function is as follows. Catalyzes the condensation of ATP and 5-phosphoribose 1-diphosphate to form N'-(5'-phosphoribosyl)-ATP (PR-ATP). Has a crucial role in the pathway because the rate of histidine biosynthesis seems to be controlled primarily by regulation of HisG enzymatic activity. This chain is ATP phosphoribosyltransferase (hisG), found in Mesorhizobium japonicum (strain LMG 29417 / CECT 9101 / MAFF 303099) (Mesorhizobium loti (strain MAFF 303099)).